We begin with the raw amino-acid sequence, 184 residues long: Photosystem I assembly protein Ycf4 (184 aa).

A run of 2 helical transmembrane segments spans residues 22–42 and 57–77; these read FCWA…GISS and IIFF…LFIS.

This sequence belongs to the Ycf4 family.

It localises to the plastid. The protein resides in the chloroplast thylakoid membrane. In terms of biological role, seems to be required for the assembly of the photosystem I complex. The polypeptide is Photosystem I assembly protein Ycf4 (Ipomoea purpurea (Common morning glory)).